The chain runs to 103 residues: Ig kappa-b4 chain C region (103 aa).

The Ig-like domain occupies 5-95 (PTVLIFPPAA…KVTQGTTSVV (91 aa)). Cys-26 and Cys-85 form a disulfide bridge.

In Oryctolagus cuniculus (Rabbit), this protein is Ig kappa-b4 chain C region.